A 215-amino-acid chain; its full sequence is GTP-binding protein YPT6 (215 aa).

Residue 17-24 (GEQGVGKT) participates in GTP binding. The short motif at 39–47 (YQATIGIDF) is the Effector region element. Residues 65–69 (DTAGQ) and 124–127 (NKSD) contribute to the GTP site. Residues 178-196 (NSESTPLDSENANSANQNK) show a composition bias toward polar residues. The segment at 178–215 (NSESTPLDSENANSANQNKPGVIDISTAEEQEQSACQC) is disordered. S-geranylgeranyl cysteine attachment occurs at residues Cys213 and Cys215. Cys215 bears the Cysteine methyl ester mark.

The protein belongs to the small GTPase superfamily. Rab family. As to quaternary structure, interacts with YIF1, YIP3 and YIP4.

Its subcellular location is the cell membrane. Protein transport. Might participate in post-Golgi transport. This Saccharomyces cerevisiae (strain ATCC 204508 / S288c) (Baker's yeast) protein is GTP-binding protein YPT6 (YPT6).